A 317-amino-acid polypeptide reads, in one-letter code: MKKTANKVVLIGAGAVGTSFLYAAINQGIAEHYVLIDAFPQPAEGNALDLSDTLAVIPHSFTSIKAGSYEDCKDADVVVITAGRPQKPGETRLEMVAGNAEIMKNIATEVKKSGFDGITVIASNPVDVITHVYQKVTGFDPHKVIGSGTTLDSARLRRLVGQKLNVKPESVQAYVAGEHGDSSVAIWSQANIMGRPILDYVKCGCLTLEDLDQIQKDTVDMAYKIINLKRATFYGIGACLTKIVNAVLRDEKATLMVGAQLNGEYKNKDLYTGVPAIIGSNGWEKIIEWDLTKEEQEKFDKSCETLHKTIDSVKHLF.

Positions 16, 37, and 69 each coordinate NAD(+). Residues glutamine 86, arginine 92, and 124–127 (NPVD) contribute to the substrate site. Residues 122–124 (ASN) and serine 147 contribute to the NAD(+) site. Residue 152–155 (DSAR) participates in substrate binding. Histidine 179 (proton acceptor) is an active-site residue. Tyrosine 223 is subject to Phosphotyrosine. Threonine 232 is a substrate binding site.

This sequence belongs to the LDH/MDH superfamily. LDH family. In terms of assembly, homotetramer.

The protein localises to the cytoplasm. It carries out the reaction (S)-lactate + NAD(+) = pyruvate + NADH + H(+). The protein operates within fermentation; pyruvate fermentation to lactate; (S)-lactate from pyruvate: step 1/1. In terms of biological role, catalyzes the conversion of lactate to pyruvate. In Mycoplasma capricolum subsp. capricolum (strain California kid / ATCC 27343 / NCTC 10154), this protein is L-lactate dehydrogenase.